The following is a 285-amino-acid chain: Inositol monophosphatase 1 (285 aa).

The Mg(2+) site is built by Glu-73, Asp-93, Ile-95, and Asp-96. Glu-73 lines the substrate pocket. Substrate is bound by residues 95-98 (IDGT), 198-200 (GTA), Glu-217, and Asp-224. Asp-224 serves as a coordination point for Mg(2+).

It belongs to the inositol monophosphatase superfamily. In terms of assembly, homodimer. Mg(2+) serves as cofactor.

It localises to the cytoplasm. It carries out the reaction a myo-inositol phosphate + H2O = myo-inositol + phosphate. It catalyses the reaction 1D-myo-inositol 1-phosphate + H2O = myo-inositol + phosphate. The catalysed reaction is 1D-myo-inositol 2-phosphate + H2O = myo-inositol + phosphate. The enzyme catalyses 1D-myo-inositol 3-phosphate + H2O = myo-inositol + phosphate. It carries out the reaction 1D-myo-inositol 4-phosphate + H2O = myo-inositol + phosphate. It catalyses the reaction 1D-myo-inositol 5-phosphate + H2O = myo-inositol + phosphate. The catalysed reaction is 1D-myo-inositol 6-phosphate + H2O = myo-inositol + phosphate. The enzyme catalyses scyllo-inositol 1-phosphate + H2O = scyllo-inositol + phosphate. It carries out the reaction alpha-D-galactose 1-phosphate + H2O = D-galactose + phosphate. It catalyses the reaction alpha-D-glucose 1-phosphate + H2O = D-glucose + phosphate. The catalysed reaction is D-glucose 6-phosphate + H2O = D-glucose + phosphate. The enzyme catalyses beta-D-fructose 1-phosphate + H2O = D-fructose + phosphate. It carries out the reaction glycerol 2-phosphate + H2O = glycerol + phosphate. It catalyses the reaction adenosine 2'-phosphate + H2O = adenosine + phosphate. Its pathway is polyol metabolism; myo-inositol biosynthesis; myo-inositol from D-glucose 6-phosphate: step 2/2. With respect to regulation, inhibited by Li(+), Ca(2+) and Mn(2+), but also by Mg(2+) at concentrations above 3 mM. Functionally, phosphatase involved in the dephosphorylation of myo-inositol monophosphate to generate myo-inositol. Is also able to dephosphorylate scyllo-inositol-phosphate, myo-inositol 1,4-diphosphate, scyllo-inositol-1,3-diphosphate and scyllo-inositol-1,4-diphosphate. Also dephosphorylates in vitro other sugar-phosphates including D-galactose-1-phosphate, glucose-1-phosphate, glucose-6-phosphate, fructose-1-phosphate, beta-glycerophosphate and 2'-AMP. Responsible for the provision of inositol required for synthesis of phosphatidylinositol and polyphosphoinositides, and involved in maintaining normal brain function. Has been implicated as the pharmacological target for lithium Li(+) action in brain. This is Inositol monophosphatase 1 (impa1) from Xenopus laevis (African clawed frog).